Here is a 422-residue protein sequence, read N- to C-terminus: Phospho-N-acetylmuramoyl-pentapeptide-transferase (422 aa).

Helical transmembrane passes span 28 to 48 (LMAV…FINL), 71 to 91 (VGVP…PCLL), 95 to 115 (LDNI…SLGF), 136 to 156 (IIGQ…SPDV), 211 to 231 (AGWF…SNGA), 239 to 259 (GMAA…AYVS), 279 to 299 (LVIY…YNAY), 313 to 333 (IGGI…IPIL), and 399 to 419 (KITV…IITL).

It belongs to the glycosyltransferase 4 family. MraY subfamily. Mg(2+) is required as a cofactor.

It is found in the cell inner membrane. It catalyses the reaction UDP-N-acetyl-alpha-D-muramoyl-L-alanyl-gamma-D-glutamyl-meso-2,6-diaminopimeloyl-D-alanyl-D-alanine + di-trans,octa-cis-undecaprenyl phosphate = di-trans,octa-cis-undecaprenyl diphospho-N-acetyl-alpha-D-muramoyl-L-alanyl-D-glutamyl-meso-2,6-diaminopimeloyl-D-alanyl-D-alanine + UMP. It functions in the pathway cell wall biogenesis; peptidoglycan biosynthesis. In terms of biological role, catalyzes the initial step of the lipid cycle reactions in the biosynthesis of the cell wall peptidoglycan: transfers peptidoglycan precursor phospho-MurNAc-pentapeptide from UDP-MurNAc-pentapeptide onto the lipid carrier undecaprenyl phosphate, yielding undecaprenyl-pyrophosphoryl-MurNAc-pentapeptide, known as lipid I. In Bacteroides thetaiotaomicron (strain ATCC 29148 / DSM 2079 / JCM 5827 / CCUG 10774 / NCTC 10582 / VPI-5482 / E50), this protein is Phospho-N-acetylmuramoyl-pentapeptide-transferase.